Here is a 315-residue protein sequence, read N- to C-terminus: MPELLVFPAQTDLHEHPLYRAGHLILQDRASCLPAMLLDPRQAPMSWMPVPPQAIKTSHLAALLKNQGKIFAFDLDARRLASMATLLAWAGVSCCELAEEDFLAVSPLDPRYREVHYVLLDPSCSGSGMPSRQLEEPGAGTPSPVRLHALAGFQQRALCHALTFPSLQRLVYSMCSLCQEENEDMVQDALQQNPGAFRLAPALPARPHRGLSTFPGAEHCLRASPKTTLSGGFFVAVIERVEMPTSASQAKASAPERTPSPAPKRKKRAKSCSRCLHTALHIAEAPGSLLPGGKGRCLSSPWKTLGPHRRQQFAF.

S-adenosyl-L-methionine is bound by residues 50-56, D74, R79, and D121; that span reads VPPQAIK. C175 serves as the catalytic Nucleophile. Residues 245-269 form a disordered region; the sequence is TSASQAKASAPERTPSPAPKRKKRA.

Belongs to the class I-like SAM-binding methyltransferase superfamily. RsmB/NOP family. Ubiquitous.

In terms of biological role, may have S-adenosyl-L-methionine-dependent methyl-transferase activity. The chain is Putative methyltransferase NSUN5C (NSUN5P2) from Homo sapiens (Human).